The following is a 362-amino-acid chain: Oxysterol-binding protein 5 (362 aa).

The protein belongs to the OSBP family.

The polypeptide is Oxysterol-binding protein 5 (osbE) (Dictyostelium discoideum (Social amoeba)).